Here is a 394-residue protein sequence, read N- to C-terminus: Elongation factor Tu 2 (394 aa).

The region spanning Lys-10–Ala-204 is the tr-type G domain. The interval Gly-19–Thr-26 is G1. Gly-19–Thr-26 contributes to the GTP binding site. Thr-26 contributes to the Mg(2+) binding site. The interval Gly-60–Asn-64 is G2. The interval Asp-81–Gly-84 is G3. GTP is bound by residues Asp-81–His-85 and Asn-136–Asp-139. Residues Asn-136–Asp-139 are G4. Residues Ser-174–Leu-176 form a G5 region.

This sequence belongs to the TRAFAC class translation factor GTPase superfamily. Classic translation factor GTPase family. EF-Tu/EF-1A subfamily. In terms of assembly, monomer.

Its subcellular location is the cytoplasm. It carries out the reaction GTP + H2O = GDP + phosphate + H(+). Functionally, GTP hydrolase that promotes the GTP-dependent binding of aminoacyl-tRNA to the A-site of ribosomes during protein biosynthesis. The chain is Elongation factor Tu 2 from Shewanella frigidimarina (strain NCIMB 400).